Here is a 1827-residue protein sequence, read N- to C-terminus: Phenolphthiocerol/phthiocerol polyketide synthase subunit C (1827 aa).

Residues Cys35–Gln461 enclose the Ketosynthase family 3 (KS3) domain. Active-site for beta-ketoacyl synthase activity residues include Cys207, His342, and His383. The acyltransferase stretch occupies residues Val566–Glu876. The active-site For malonyltransferase activity is Ser654. An N-terminal hotdog fold region spans residues His910–Cys1037. Positions His910 to Leu1076 are dehydratase. One can recognise a PKS/mFAS DH domain in the interval His910–Pro1198. His942 serves as the catalytic Proton acceptor; for dehydratase activity. A C-terminal hotdog fold region spans residues Gly1050–Pro1198. Asp1111 acts as the Proton donor; for dehydratase activity in catalysis. The segment at Ala1439 to Val1617 is beta-ketoacyl reductase. Ser1440–Leu1485 contacts NADP(+). The region spanning Arg1706–Leu1785 is the Carrier domain. At Ser1745 the chain carries O-(pantetheine 4'-phosphoryl)serine.

NADP(+) serves as cofactor. Pantetheine 4'-phosphate is required as a cofactor.

The enzyme catalyses icosanoyl-[(phenol)carboxyphthiodiolenone synthase] + 2 (S)-methylmalonyl-CoA + 3 malonyl-CoA + 5 NADPH + 10 H(+) = C32-carboxyphthiodiolenone-[(phenol)carboxyphthiodiolenone synthase] + 5 CO2 + 5 NADP(+) + 5 CoA + 2 H2O. It catalyses the reaction docosanoyl-[(phenol)carboxyphthiodiolenone synthase] + 2 (S)-methylmalonyl-CoA + 3 malonyl-CoA + 5 NADPH + 10 H(+) = C34-carboxyphthiodiolenone-[(phenol)carboxyphthiodiolenone synthase] + 5 CO2 + 5 NADP(+) + 5 CoA + 2 H2O. It carries out the reaction 17-(4-hydroxyphenyl)heptadecanoyl-[(phenol)carboxyphthiodiolenone synthase] + 2 (S)-methylmalonyl-CoA + 3 malonyl-CoA + 5 NADPH + 10 H(+) = C35-(phenol)carboxyphthiodiolenone-[(phenol)carboxyphthiodiolenone synthase] + 5 CO2 + 5 NADP(+) + 5 CoA + 2 H2O. The catalysed reaction is 19-(4-hydroxyphenyl)nonadecanoyl-[(phenol)carboxyphthiodiolenone synthase] + 2 (S)-methylmalonyl-CoA + 3 malonyl-CoA + 5 NADPH + 10 H(+) = C37-(phenol)carboxyphthiodiolenone-[(phenol)carboxyphthiodiolenone synthase] + 5 CO2 + 5 NADP(+) + 5 CoA + 2 H2O. The protein operates within lipid metabolism; fatty acid biosynthesis. In terms of biological role, part of the PpsABCDE complex involved in the biosynthesis of the lipid core common to phthiocerols and phenolphthiocerols by successive additions of malonyl-CoA or methylmalonyl-CoA extender units. PpsA can accept as substrate the activated forms of either icosanoyl (C20), docosanoyl (C22) or lignoceroyl (C24) groups from FadD26, or a (4-hydroxyphenyl)-C17 or (4-hydroxyphenyl)-C19 fatty acyl from FadD29. PpsA initiates the biosynthesis and extends its substrate using a malonyl-CoA extender unit. The PpsB and PpsC proteins add the second and third malonyl-CoA extender units. PpsD adds an (R)-methylmalonyl unit and PpsE adds a second (R)-methylmalonyl unit. The incorporation of the methylmalonyl units results in formation of two branched methyl groups in the elongated product. This chain is Phenolphthiocerol/phthiocerol polyketide synthase subunit C (ppsD), found in Mycobacterium bovis (strain ATCC BAA-935 / AF2122/97).